A 406-amino-acid polypeptide reads, in one-letter code: Ascaroside receptor GPR2 (406 aa).

At 1-29 (MTQLPYLLDRRGGALAAPATAWGDMMLNR) the chain is on the extracellular side. A helical membrane pass occupies residues 30–50 (ALFSVALLSSVGSAWVVLSYA). At 51-61 (CIKELRSYRHQ) the chain is on the cytoplasmic side. Residues 62 to 82 (LILGLAISDLLMSLNFMFSAG) traverse the membrane as a helical segment. The Extracellular portion of the chain corresponds to 83 to 107 (WNVAGGDLALEESRTACSVNGFLTQ). Cysteines 99 and 173 form a disulfide. A helical membrane pass occupies residues 108 to 128 (VFVVQTDWWILVIAIATYIIL). Residues 129-143 (GNFKTQSQFIQTHVW) lie on the Cytoplasmic side of the membrane. Residues 144 to 164 (IPWVGPWVLSIIIAAICHGVL) form a helical membrane-spanning segment. The Extracellular portion of the chain corresponds to 165–185 (GYGYIGGWCWLTSDLMRLLIN). A helical membrane pass occupies residues 186–206 (FIPRWLIVIAIALIYIRLYMI). Residues 207–326 (VRKARKWDIE…AAQLKRIAKK (120 aa)) are Cytoplasmic-facing. A helical membrane pass occupies residues 327 to 347 (MMVYPVAYAIIWACPTAIRIY). Over 348–356 (QGTTGSRAP) the chain is Extracellular. The helical transmembrane segment at 357 to 377 (LWITIVDKSCIVIQGLVDAVV) threads the bilayer. Residues 378–406 (YGLNERAWQGWRDHIRRIIYKNEGGRIIG) lie on the Cytoplasmic side of the membrane.

It belongs to the G-protein coupled receptor 1 family. Interacts with ascaroside receptor GPR3; may form a functional heterodimer. Interacts with guanine nucleotide-binding protein alpha GPA2; to activate adenylate cyclase and positively regulate nematode trap formation.

Its subcellular location is the cell membrane. G protein-coupled receptor that senses nematode ascaroside pheromones and signals via adenylate cyclase to positively regulate trap formation for nematode capture. The sequence is that of Ascaroside receptor GPR2 from Arthrobotrys oligospora (strain ATCC 24927 / CBS 115.81 / DSM 1491) (Nematode-trapping fungus).